A 674-amino-acid polypeptide reads, in one-letter code: Protein tesmin/TSO1-like CXC 2 (674 aa).

2 stretches are compositionally biased toward polar residues: residues Met-1–Ser-16 and Thr-76–Glu-89. Disordered regions lie at residues Met-1 to Phe-20 and Lys-69 to Ile-113. The segment covering Ser-95–Lys-109 has biased composition (basic and acidic residues). Residues Ser-373–Gly-498 form the CRC domain. Disordered regions lie at residues Ser-504 to Asn-529 and Ile-623 to Gly-655. Residues Met-507–Glu-516 are compositionally biased toward acidic residues.

The protein belongs to the lin-54 family. In terms of tissue distribution, ubiquitous but expressed mostly in all the aerial organs with highest expression in flowers.

The protein localises to the nucleus. Functionally, plays a role in development of both male and female reproductive tissues. This chain is Protein tesmin/TSO1-like CXC 2 (TCX2), found in Arabidopsis thaliana (Mouse-ear cress).